The primary structure comprises 142 residues: Hemoglobin subunit zeta (142 aa).

S2 carries the post-translational modification N-acetylserine. A Globin domain is found at 2 to 142; it reads SLTKAERTMV…VSSVLTEKYR (141 aa). The residue at position 53 (S53) is a Phosphoserine. Heme b is bound at residue H59. Position 73 is a phosphoserine (S73). Position 88 (H88) interacts with heme b.

Belongs to the globin family. In terms of assembly, heterotetramer of two zeta chains and beta-type chains.

Its function is as follows. The zeta chain is an alpha-type chain of mammalian embryonic hemoglobin. The chain is Hemoglobin subunit zeta (HBZ1) from Equus caballus (Horse).